The sequence spans 932 residues: UPF0182 protein Amet_0022 (932 aa).

7 helical membrane passes run valine 14 to leucine 34, leucine 60 to glycine 80, isoleucine 104 to leucine 124, threonine 166 to isoleucine 186, leucine 208 to alanine 228, valine 256 to valine 276, and leucine 286 to leucine 306.

It belongs to the UPF0182 family.

The protein localises to the cell membrane. This Alkaliphilus metalliredigens (strain QYMF) protein is UPF0182 protein Amet_0022.